A 282-amino-acid polypeptide reads, in one-letter code: Trihydroxynaphthalene reductase (282 aa).

NADP(+)-binding residues include I41, N114, and R147. Residues S164 and Y178 each act as proton donor in the active site. The NADP(+) site is built by Y178, K182, I211, and T213. The Lowers pKa of active site Tyr role is filled by K182.

Belongs to the short-chain dehydrogenases/reductases (SDR) family. As to quaternary structure, homotetramer.

It participates in pigment biosynthesis; melanin biosynthesis. In terms of biological role, catalyzes the NADPH-dependent reduction of 1,3,8-trihydroxynaphthalene (T3HN) into (-)-vermelone. Essential for appressorial penetration of colletotrichum lagenarium. In Colletotrichum orbiculare (strain 104-T / ATCC 96160 / CBS 514.97 / LARS 414 / MAFF 240422) (Cucumber anthracnose fungus), this protein is Trihydroxynaphthalene reductase (THR1).